Reading from the N-terminus, the 209-residue chain is High frequency lysogenization protein HflD homolog (209 aa).

This sequence belongs to the HflD family.

The protein localises to the cytoplasm. The protein resides in the cell inner membrane. The protein is High frequency lysogenization protein HflD homolog of Sodalis glossinidius (strain morsitans).